The sequence spans 379 residues: Probable purine permease 11 (379 aa).

10 consecutive transmembrane segments (helical) span residues 43-63, 76-96, 114-134, 144-164, 167-187, 203-223, 239-259, 294-313, 314-330, and 334-354; these read WVLVSVNIFFLIGGQAASVLL, WMATLVQTAAFPILYIPLLLL, IVLIYVLLGVIIAGDNMLYSV, YSLICATQLAFNAVFSYFINA, FTALILNSVVLLSFSAALIAL, IVGFVCTLAASALYSLLLSLM, VLEMQIYTSLVATCVSVIGLF, VCSVGVVGLIFLVTSLFSNV, ISTLSLAVTPLAALVVF, and MSGVKIMAMLIAIWGFASYVY.

Belongs to the purine permeases (TC 2.A.7.14) family. May form a complex with the potassium channel subunit KAT1.

It is found in the membrane. This chain is Probable purine permease 11 (PUP11), found in Arabidopsis thaliana (Mouse-ear cress).